Consider the following 223-residue polypeptide: Ribosomal RNA small subunit methyltransferase G (223 aa).

S-adenosyl-L-methionine-binding positions include Gly-84, Leu-89, 135-136, and Arg-150; that span reads VE.

This sequence belongs to the methyltransferase superfamily. RNA methyltransferase RsmG family.

The protein resides in the cytoplasm. It catalyses the reaction guanosine(527) in 16S rRNA + S-adenosyl-L-methionine = N(7)-methylguanosine(527) in 16S rRNA + S-adenosyl-L-homocysteine. Functionally, specifically methylates the N7 position of guanine in position 527 of 16S rRNA. This is Ribosomal RNA small subunit methyltransferase G from Saccharophagus degradans (strain 2-40 / ATCC 43961 / DSM 17024).